The primary structure comprises 248 residues: Ureidoacrylate amidohydrolase RutB (248 aa).

Asp-41 serves as the catalytic Proton acceptor. Residue Lys-150 is part of the active site. Cys-183 functions as the Nucleophile in the catalytic mechanism.

Belongs to the isochorismatase family. RutB subfamily.

It catalyses the reaction (Z)-3-ureidoacrylate + H2O + H(+) = (Z)-3-aminoacrylate + NH4(+) + CO2. The enzyme catalyses (Z)-3-ureidoacrylate + H2O = (Z)-3-aminoacrylate + carbamate + H(+). It carries out the reaction (Z)-2-methylureidoacrylate + H2O + H(+) = (Z)-2-methylaminoacrylate + NH4(+) + CO2. Functionally, hydrolyzes ureidoacrylate to form aminoacrylate and carbamate. The carbamate hydrolyzes spontaneously, thereby releasing one of the nitrogen atoms of the pyrimidine ring as ammonia and one of its carbon atoms as CO2. The sequence is that of Ureidoacrylate amidohydrolase RutB from Methylorubrum extorquens (strain CM4 / NCIMB 13688) (Methylobacterium extorquens).